The chain runs to 653 residues: Protease 1 (653 aa).

Residues 1–20 (MKRICGSLLLLGLSISAALA) constitute a signal peptide (or 27). Positions 21-205 (APASRPAAFD…RRLAAASGEK (185 aa)) are excised as a propeptide. 3 disulfides stabilise this stretch: Cys211–Cys421, Cys217–Cys285, and Cys241–Cys263. Residues His262, Asp318, and Ser399 each act as charge relay system in the active site. Residues 474 to 553 (NTPPVANFTS…TNTKTGSVTV (80 aa)) enclose the PKD domain. Positions 474–653 (NTPPVANFTS…AAQRAPGSCG (180 aa)) are cleaved as a propeptide — thr/Ser-rich. Positions 555–653 (GGPGAQTYTN…AAQRAPGSCG (99 aa)) constitute a P/Homo B domain.

This sequence belongs to the peptidase S1 family. Post-translationally, three disulfide bonds are present.

Its subcellular location is the secreted. It carries out the reaction Preferential cleavage: Lys-|-Xaa, including Lys-|-Pro.. The protein is Protease 1 of Achromobacter lyticus.